Consider the following 304-residue polypeptide: Spore coat protein CotB (304 aa).

The protein localises to the spore coat. It localises to the spore. It is found in the perispore. Functionally, contributes to the formation of thick-exosporium spores. In Clostridioides difficile (strain 630) (Peptoclostridium difficile), this protein is Spore coat protein CotB.